The chain runs to 416 residues: Serine hydroxymethyltransferase (416 aa).

Residues L121 and 125 to 127 contribute to the (6S)-5,6,7,8-tetrahydrofolate site; that span reads GHL. K229 carries the post-translational modification N6-(pyridoxal phosphate)lysine.

It belongs to the SHMT family. As to quaternary structure, homodimer. It depends on pyridoxal 5'-phosphate as a cofactor.

It localises to the cytoplasm. The catalysed reaction is (6R)-5,10-methylene-5,6,7,8-tetrahydrofolate + glycine + H2O = (6S)-5,6,7,8-tetrahydrofolate + L-serine. Its pathway is one-carbon metabolism; tetrahydrofolate interconversion. It participates in amino-acid biosynthesis; glycine biosynthesis; glycine from L-serine: step 1/1. In terms of biological role, catalyzes the reversible interconversion of serine and glycine with tetrahydrofolate (THF) serving as the one-carbon carrier. This reaction serves as the major source of one-carbon groups required for the biosynthesis of purines, thymidylate, methionine, and other important biomolecules. Also exhibits THF-independent aldolase activity toward beta-hydroxyamino acids, producing glycine and aldehydes, via a retro-aldol mechanism. The chain is Serine hydroxymethyltransferase from Aromatoleum aromaticum (strain DSM 19018 / LMG 30748 / EbN1) (Azoarcus sp. (strain EbN1)).